Reading from the N-terminus, the 346-residue chain is Very-long-chain 3-oxoacyl-CoA reductase (346 aa).

Residues Val19–Thr39 form a helical membrane-spanning segment. NADP(+) contacts are provided by Val65, Asp119, Asn146, Tyr220, Lys224, Val253, and Ser255. The Proton donor role is filled by Tyr220. Lys224 functions as the Lowers pKa of active site Tyr in the catalytic mechanism.

Belongs to the short-chain dehydrogenases/reductases (SDR) family.

It is found in the endoplasmic reticulum membrane. It catalyses the reaction a very-long-chain (3R)-3-hydroxyacyl-CoA + NADP(+) = a very-long-chain 3-oxoacyl-CoA + NADPH + H(+). The protein operates within lipid metabolism; fatty acid biosynthesis. Its function is as follows. Component of the microsomal membrane bound fatty acid elongation system, which produces the 26-carbon very long-chain fatty acids (VLCFA) from palmitate. Catalyzes the reduction of the 3-ketoacyl-CoA intermediate that is formed in each cycle of fatty acid elongation. VLCFAs serve as precursors for ceramide and sphingolipids. The polypeptide is Very-long-chain 3-oxoacyl-CoA reductase (Scheffersomyces stipitis (strain ATCC 58785 / CBS 6054 / NBRC 10063 / NRRL Y-11545) (Yeast)).